The sequence spans 754 residues: Bifunctional sesterterpene synthase astC (754 aa).

A signal peptide spans methionine 1 to serine 24. A sesterterpene synthase region spans residues isoleucine 58–tryptophan 388. Positions 149 and 153 each coordinate Mg(2+). The tract at residues arginine 389 to valine 753 is geranylfarnesyl diphosphate synthase. A compositionally biased stretch (basic and acidic residues) spans glutamate 392–aspartate 403. The disordered stretch occupies residues glutamate 392–serine 414. The Mg(2+) site is built by aspartate 512 and aspartate 516.

It in the N-terminal section; belongs to the terpene synthase family. This sequence in the C-terminal section; belongs to the FPP/GGPP synthase family. It depends on Mg(2+) as a cofactor.

It carries out the reaction (2E,6E,10E,14E)-geranylfarnesyl diphosphate = preasperterpenoid A + diphosphate. It participates in secondary metabolite biosynthesis; terpenoid biosynthesis. In terms of biological role, bifunctional sesterterpene synthase; part of the gene cluster that mediates the biosynthesis of the asperterpenoids, sesterterpenes that exhibit anti-tuberculosis activity. The first step of the pathway is performed by the sesterterpene synthase astC that possesses both prenyl transferase and terpene cyclase activity, converting isopentenyl diphosphate and dimethylallyl diphosphate into geranylfarnesyl diphosphate (GFPP) and further converting GFPP into preasperterpenoid A, respectively. The cytochrome P450 monooxygenase astB then dually oxidizes preasperterpenoid A to produce asperterpenoid A along with a minor product, asperterpenoid B. Finally, the cytochrome P450 monooxygenase astA converts asperterpenoid A into asperterpenoid C. The polypeptide is Bifunctional sesterterpene synthase astC (Talaromyces wortmannii (Penicillium wortmannii)).